Here is a 377-residue protein sequence, read N- to C-terminus: Carbamoyl phosphate synthase small chain (377 aa).

Residues 1–186 form a CPSase region; the sequence is MSTPALLVLA…LGKGFVTPDE (186 aa). L-glutamine-binding residues include Ser47, Gly238, and Gly240. Residues 190–377 form the Glutamine amidotransferase type-1 domain; it reads HVVAYDFGVK…IGNMKAAKRA (188 aa). Residue Cys266 is the Nucleophile of the active site. Residues Leu267, Gln270, Asn308, Gly310, and Phe311 each contribute to the L-glutamine site. Active-site residues include His350 and Glu352.

It belongs to the CarA family. As to quaternary structure, composed of two chains; the small (or glutamine) chain promotes the hydrolysis of glutamine to ammonia, which is used by the large (or ammonia) chain to synthesize carbamoyl phosphate. Tetramer of heterodimers (alpha,beta)4.

It carries out the reaction hydrogencarbonate + L-glutamine + 2 ATP + H2O = carbamoyl phosphate + L-glutamate + 2 ADP + phosphate + 2 H(+). The catalysed reaction is L-glutamine + H2O = L-glutamate + NH4(+). It participates in amino-acid biosynthesis; L-arginine biosynthesis; carbamoyl phosphate from bicarbonate: step 1/1. It functions in the pathway pyrimidine metabolism; UMP biosynthesis via de novo pathway; (S)-dihydroorotate from bicarbonate: step 1/3. Functionally, small subunit of the glutamine-dependent carbamoyl phosphate synthetase (CPSase). CPSase catalyzes the formation of carbamoyl phosphate from the ammonia moiety of glutamine, carbonate, and phosphate donated by ATP, constituting the first step of 2 biosynthetic pathways, one leading to arginine and/or urea and the other to pyrimidine nucleotides. The small subunit (glutamine amidotransferase) binds and cleaves glutamine to supply the large subunit with the substrate ammonia. The polypeptide is Carbamoyl phosphate synthase small chain (Neisseria meningitidis serogroup A / serotype 4A (strain DSM 15465 / Z2491)).